Consider the following 479-residue polypeptide: Type I inositol polyphosphate 5-phosphatase 8 (479 aa).

Catalytic regions lie at residues 300–315 and 379–394; these read DKVIWLGDLNYRLRAS and KRRTPAWCDRILWKGD.

This sequence belongs to the inositol polyphosphate 5-phosphatase family.

This Arabidopsis thaliana (Mouse-ear cress) protein is Type I inositol polyphosphate 5-phosphatase 8.